Consider the following 191-residue polypeptide: Ribosome maturation factor RimP (191 aa).

Belongs to the RimP family.

The protein resides in the cytoplasm. Its function is as follows. Required for maturation of 30S ribosomal subunits. The sequence is that of Ribosome maturation factor RimP from Caulobacter vibrioides (strain NA1000 / CB15N) (Caulobacter crescentus).